Reading from the N-terminus, the 957-residue chain is AP2-associated protein kinase 1 (957 aa).

At Met-1 the chain carries N-acetylmethionine. Residues 1-11 (MKKFFDSRREQ) are compositionally biased toward basic and acidic residues. Residues 1-25 (MKKFFDSRREQGGSGLGSGSSGGGG) form a disordered region. Positions 12–25 (GGSGLGSGSSGGGG) are enriched in gly residues. A Phosphoserine modification is found at Ser-14. Residues 46 to 315 (VTVDEVLAEG…QVSYFSFKLL (270 aa)) form the Protein kinase domain. ATP-binding positions include 52-60 (LAEGGFAIV) and Lys-74. The Proton acceptor role is filled by Asp-176. Tyr-234 bears the Phosphotyrosine mark. A Phosphoserine modification is found at Ser-235. 2 disordered regions span residues 326 to 506 (NSPI…AVHP) and 563 to 629 (TAAA…AGHR). Residues Thr-354 and Thr-389 each carry the phosphothreonine modification. At Arg-391 the chain carries Omega-N-methylarginine. Pro residues predominate over residues 436 to 448 (PQAPPTSQQPPSA). Thr-441 carries the phosphothreonine modification. Composition is skewed to low complexity over residues 449-506 (PAQA…AVHP) and 563-601 (TAAA…KVQT). Position 602 is a phosphothreonine (Thr-602). A compositionally biased stretch (polar residues) spans 607–617 (IQGQKLGSLTP). Phosphoserine is present on Ser-614. Position 616 is a phosphothreonine (Thr-616). Phosphoserine is present on residues Ser-619, Ser-620, Ser-633, and Ser-646. Thr-649 is subject to Phosphothreonine. Residues 660-697 (SLNKSKSATTTPSGSPRASQQNVYNPSEGSTWNPFDDD) are disordered. The segment covering 668-692 (TTTPSGSPRASQQNVYNPSEGSTWN) has biased composition (polar residues). A Phosphotyrosine modification is found at Tyr-683. 4 positions are modified to phosphoserine: Ser-727, Ser-842, Ser-933, and Ser-934. The interval 819–956 (EKADVAVESL…SLLLVDQLID (138 aa)) is clathrin-binding domain (CBD). 2 disordered regions span residues 832 to 855 (LEPP…TDSL) and 919 to 941 (VLIT…ESSL). Residues 840–855 (LPSQTESVTSNRTDSL) are compositionally biased toward polar residues. A compositionally biased stretch (low complexity) spans 927–940 (GGHSRNSSGSSESS).

It belongs to the protein kinase superfamily. Ser/Thr protein kinase family. In terms of assembly, interacts (via CBD domain) with clathrin. Interacts with AP-2 complex. Interacts with NUMB. Interacts with alpha-adaptin. Interacts with EPS15 isoform 2. Interacts with membrane-bound activated NOTCH1 but not with the inactive full-length form of NOTCH1. Preferentially interacts with monoubiquitinated activated NOTCH1 compared to the non-ubiquitinated form. Autophosphorylated. In terms of tissue distribution, detected in brain (at protein level).

It is found in the cell membrane. Its subcellular location is the membrane. The protein resides in the clathrin-coated pit. The protein localises to the presynapse. It carries out the reaction L-seryl-[protein] + ATP = O-phospho-L-seryl-[protein] + ADP + H(+). It catalyses the reaction L-threonyl-[protein] + ATP = O-phospho-L-threonyl-[protein] + ADP + H(+). Stimulated by clathrin. Regulates clathrin-mediated endocytosis by phosphorylating the AP2M1/mu2 subunit of the adaptor protein complex 2 (AP-2) which ensures high affinity binding of AP-2 to cargo membrane proteins during the initial stages of endocytosis. Preferentially, may phosphorylate substrates on threonine residues. Regulates phosphorylation of other AP-2 subunits as well as AP-2 localization and AP-2-mediated internalization of ligand complexes. Phosphorylates NUMB and regulates its cellular localization, promoting NUMB localization to endosomes. Binds to and stabilizes the activated form of NOTCH1, increases its localization in endosomes and regulates its transcriptional activity. In Bos taurus (Bovine), this protein is AP2-associated protein kinase 1 (AAK1).